The following is a 558-amino-acid chain: Deleted in azoospermia protein 2 (558 aa).

Over residues 1 to 10 (MSAANPETPN) the composition is skewed to polar residues. A disordered region spans residues 1–27 (MSAANPETPNSTISREASTQSSSAAAS). Positions 11-27 (STISREASTQSSSAAAS) are enriched in low complexity. Residues 40–115 (NTVFVGGIDA…KKLKLGPAIR (76 aa)) form the RRM domain. DAZ domains follow at residues 167–190 (AYSA…YNYQ), 191–214 (EYPT…YNYQ), 215–238 (PFPA…YNYQ), 239–262 (AFPA…YNYQ), 263–286 (PFPA…YNYQ), 287–310 (AFPA…YNYQ), 311–334 (AFPA…YNYQ), 335–358 (AFPA…YNYQ), 359–382 (AFPA…YNYQ), 383–406 (AFPA…YNYQ), 407–430 (AFPA…YNYQ), 431–454 (AFPA…YNYQ), 455–478 (AFPA…YNYQ), 479–502 (AFPA…YNYQ), and 503–526 (AFPA…YNYQ).

It belongs to the RRM DAZ family. In terms of assembly, forms a heterodimer with BOLL and DAZL. Interacts with PUM2, DAZAP1, DAZAP2, DZIP1 and DZIP3. As to expression, testis specific.

The protein localises to the cytoplasm. It is found in the nucleus. RNA-binding protein that plays an essential role in spermatogenesis. May act by binding to the 3'-UTR of mRNAs and regulating their translation. The sequence is that of Deleted in azoospermia protein 2 (DAZ2) from Homo sapiens (Human).